Here is a 576-residue protein sequence, read N- to C-terminus: Ecdysone receptor (576 aa).

The segment at 1–162 (MSLGARGYRR…GPAPRQQEEL (162 aa)) is modulating. The interval 87 to 154 (CTMEQQQPQP…GEARRQKKGP (68 aa)) is disordered. Residues 91-106 (QQQPQPQQQPQQTQPL) show a composition bias toward low complexity. Positions 107 to 117 (PSMPLPMPPTT) are enriched in pro residues. 2 consecutive NR C4-type zinc fingers follow at residues 163–183 (CLVCGDRASGYHYNALTCEGC) and 199–223 (CKFGHACEMDIYMRRKCQECRLKKC). The segment at residues 163-235 (CLVCGDRASG…VGMRPECVVP (73 aa)) is a DNA-binding region (nuclear receptor). Positions 245–269 (EKKAQREKDKLPVSTTTVDDHMPPI) are disordered. In terms of domain architecture, NR LBD spans 314 to 548 (NQKSLIARLV…FLEEIWDVAD (235 aa)).

The protein belongs to the nuclear hormone receptor family. NR1 subfamily.

Its subcellular location is the nucleus. Functionally, receptor for ecdysone. Binds to ecdysone response elements (ECRES). This Heliothis virescens (Tobacco budworm moth) protein is Ecdysone receptor (EcR).